A 130-amino-acid polypeptide reads, in one-letter code: MEKAKFVIKLILQLALIMLITFIGTEVQKLLHIPLAGSIVGLMLFFLLLQFKIVPESWINVGADFLLKTMVFFFIPSVVGIMDVASNITMNYILFFIVIIIGTCLVALSSGYIAEKMLEKSNTRKGTDHS.

The next 4 membrane-spanning stretches (helical) occupy residues 6-26 (FVIK…IGTE), 31-51 (LHIP…LLQF), 65-85 (FLLK…MDVA), and 93-113 (ILFF…SGYI).

This sequence belongs to the CidA/LrgA family. CidA subfamily.

The protein resides in the cell membrane. Functionally, increases the activity of extracellular murein hydrolases possibly by mediating their export via hole formation. Inhibited by the antiholin-like proteins LrgAB. In an unstressed cell, the LrgAB products probably inhibit the function of the CidAB proteins. When a cell is stressed by the addition of antibiotics or by other factors in the environment, the CidAB proteins possibly oligomerize within the bacterial cell membrane, creating lesions that disrupt the proton motive force, which in turn results in loss of cell viability. These lesions are also hypothesized to regulate the subsequent cell lysis by either allowing the murein hydrolases access to the cell wall substrate and/or regulating their activity by a possible change in the cell wall pH that results from loss of membrane potential. In Staphylococcus epidermidis (strain ATCC 35984 / DSM 28319 / BCRC 17069 / CCUG 31568 / BM 3577 / RP62A), this protein is Holin-like protein CidA.